Here is a 311-residue protein sequence, read N- to C-terminus: Class E basic helix-loop-helix protein 22 (311 aa).

Residues 22 to 170 (AKRMESAFRS…GGSKKSKEQK (149 aa)) form a disordered region. Over residues 81–96 (GESASRSSVAESSGGE) the composition is skewed to low complexity. Over residues 125-147 (AGGGGGGGGGGGGGPGGGGGGGL) the composition is skewed to gly residues. In terms of domain architecture, bHLH spans 171 to 225 (ALRLNINARERRRMHDLNDALDELRAVIPYAHSPSVRKLSKIATLLLAKNYILMQ).

The protein resides in the nucleus. May act as a transcriptional repressor. In Gallus gallus (Chicken), this protein is Class E basic helix-loop-helix protein 22 (BHLHE22).